Here is a 303-residue protein sequence, read N- to C-terminus: ATP synthase gamma chain (303 aa).

This sequence belongs to the ATPase gamma chain family. As to quaternary structure, F-type ATPases have 2 components, CF(1) - the catalytic core - and CF(0) - the membrane proton channel. CF(1) has five subunits: alpha(3), beta(3), gamma(1), delta(1), epsilon(1). CF(0) has three main subunits: a, b and c.

Its subcellular location is the cell membrane. Produces ATP from ADP in the presence of a proton gradient across the membrane. The gamma chain is believed to be important in regulating ATPase activity and the flow of protons through the CF(0) complex. This is ATP synthase gamma chain from Nocardioides sp. (strain ATCC BAA-499 / JS614).